Reading from the N-terminus, the 235-residue chain is Protein Thf1 (235 aa).

The stretch at 179–228 forms a coiled coil; the sequence is LNLSSDKLQKDLDLYRSNVDKMGQLLAVIEDALEAERKKREKAKQEVATT.

The protein belongs to the THF1 family.

Functionally, may be involved in photosynthetic membrane biogenesis. The sequence is that of Protein Thf1 from Rippkaea orientalis (strain PCC 8801 / RF-1) (Cyanothece sp. (strain PCC 8801)).